A 455-amino-acid chain; its full sequence is Bifunctional protein GlmU (455 aa).

Residues 1 to 230 (MVNKNAIILA…FDESMGVNDR (230 aa)) form a pyrophosphorylase region. UDP-N-acetyl-alpha-D-glucosamine is bound by residues 9 to 12 (LAAG), Lys-23, Gln-73, 78 to 79 (GT), 101 to 103 (SGD), Gly-140, Glu-155, Asn-170, and Asn-228. Asp-103 lines the Mg(2+) pocket. Asn-228 provides a ligand contact to Mg(2+). A linker region spans residues 231-251 (SALAKATKIMQKRINTQLMKD). Residues 252-455 (GVTLVDPETA…KPGYAKKLPW (204 aa)) are N-acetyltransferase. Arg-333 and Lys-351 together coordinate UDP-N-acetyl-alpha-D-glucosamine. His-363 acts as the Proton acceptor in catalysis. Positions 366 and 377 each coordinate UDP-N-acetyl-alpha-D-glucosamine. Residues 386 to 387 (NY), Ser-405, Ala-423, and Arg-440 contribute to the acetyl-CoA site.

It in the N-terminal section; belongs to the N-acetylglucosamine-1-phosphate uridyltransferase family. This sequence in the C-terminal section; belongs to the transferase hexapeptide repeat family. In terms of assembly, homotrimer. Mg(2+) is required as a cofactor.

It is found in the cytoplasm. The enzyme catalyses alpha-D-glucosamine 1-phosphate + acetyl-CoA = N-acetyl-alpha-D-glucosamine 1-phosphate + CoA + H(+). It carries out the reaction N-acetyl-alpha-D-glucosamine 1-phosphate + UTP + H(+) = UDP-N-acetyl-alpha-D-glucosamine + diphosphate. The protein operates within nucleotide-sugar biosynthesis; UDP-N-acetyl-alpha-D-glucosamine biosynthesis; N-acetyl-alpha-D-glucosamine 1-phosphate from alpha-D-glucosamine 6-phosphate (route II): step 2/2. Its pathway is nucleotide-sugar biosynthesis; UDP-N-acetyl-alpha-D-glucosamine biosynthesis; UDP-N-acetyl-alpha-D-glucosamine from N-acetyl-alpha-D-glucosamine 1-phosphate: step 1/1. It participates in bacterial outer membrane biogenesis; LPS lipid A biosynthesis. Catalyzes the last two sequential reactions in the de novo biosynthetic pathway for UDP-N-acetylglucosamine (UDP-GlcNAc). The C-terminal domain catalyzes the transfer of acetyl group from acetyl coenzyme A to glucosamine-1-phosphate (GlcN-1-P) to produce N-acetylglucosamine-1-phosphate (GlcNAc-1-P), which is converted into UDP-GlcNAc by the transfer of uridine 5-monophosphate (from uridine 5-triphosphate), a reaction catalyzed by the N-terminal domain. The polypeptide is Bifunctional protein GlmU (Limosilactobacillus fermentum (strain NBRC 3956 / LMG 18251) (Lactobacillus fermentum)).